A 119-amino-acid polypeptide reads, in one-letter code: Small ribosomal subunit protein bS16 (119 aa).

A compositionally biased stretch (basic and acidic residues) spans threonine 89–alanine 103. Residues threonine 89–lysine 119 form a disordered region.

Belongs to the bacterial ribosomal protein bS16 family.

In Spiroplasma kunkelii, this protein is Small ribosomal subunit protein bS16.